The chain runs to 306 residues: Non-structural protein 3 (306 aa).

The polypeptide is Non-structural protein 3 (Segment-7) (Banna virus (BAV)).